The chain runs to 418 residues: Gamma-glutamyl phosphate reductase (418 aa).

This sequence belongs to the gamma-glutamyl phosphate reductase family.

Its subcellular location is the cytoplasm. The catalysed reaction is L-glutamate 5-semialdehyde + phosphate + NADP(+) = L-glutamyl 5-phosphate + NADPH + H(+). It functions in the pathway amino-acid biosynthesis; L-proline biosynthesis; L-glutamate 5-semialdehyde from L-glutamate: step 2/2. Its function is as follows. Catalyzes the NADPH-dependent reduction of L-glutamate 5-phosphate into L-glutamate 5-semialdehyde and phosphate. The product spontaneously undergoes cyclization to form 1-pyrroline-5-carboxylate. This Halothermothrix orenii (strain H 168 / OCM 544 / DSM 9562) protein is Gamma-glutamyl phosphate reductase.